Here is a 414-residue protein sequence, read N- to C-terminus: 2,3-diketo-5-methylthiopentyl-1-phosphate enolase (414 aa).

The active-site Proton acceptor is the K99. Substrate contacts are provided by residues K148, 174–177 (KDDE), H265, G338, and 360–361 (GG). Residues K174, D176, and E177 each contribute to the Mg(2+) site. Position 174 is an N6-carboxylysine (K174).

Belongs to the RuBisCO large chain family. Type IV subfamily. Homodimer. Mg(2+) serves as cofactor.

The enzyme catalyses 5-methylsulfanyl-2,3-dioxopentyl phosphate = 2-hydroxy-5-methylsulfanyl-3-oxopent-1-enyl phosphate. It participates in amino-acid biosynthesis; L-methionine biosynthesis via salvage pathway; L-methionine from S-methyl-5-thio-alpha-D-ribose 1-phosphate: step 3/6. Catalyzes the enolization of 2,3-diketo-5-methylthiopentyl-1-phosphate (DK-MTP-1-P) into 2-hydroxy-3-keto-5-methylthiopentenyl-1-phosphate (HK-MTPenyl-1-P). The polypeptide is 2,3-diketo-5-methylthiopentyl-1-phosphate enolase (Bacillus cereus (strain ATCC 14579 / DSM 31 / CCUG 7414 / JCM 2152 / NBRC 15305 / NCIMB 9373 / NCTC 2599 / NRRL B-3711)).